The following is a 422-amino-acid chain: Tk-subtilisin (422 aa).

Residues 1–24 (MKKSIALVLSIVLLAALFAVPASA) form the signal peptide. A propeptide spanning residues 25–106 (GEQNTIRVIV…SWLGGGSTQP (82 aa)) is cleaved from the precursor. The 307-residue stretch at 111–417 (PWGIERVKAP…YGVVRAALAV (307 aa)) folds into the Peptidase S8 domain. Catalysis depends on charge relay system residues Asp139, His177, and Ser348.

It belongs to the peptidase S8 family. As to quaternary structure, monomer. The cofactor is Ca(2+).

It is found in the secreted. Its function is as follows. Has a broad substrate specificity with a slight preference to large hydrophobic amino acid residues at the P1 position. The polypeptide is Tk-subtilisin (Thermococcus kodakarensis (strain ATCC BAA-918 / JCM 12380 / KOD1) (Pyrococcus kodakaraensis (strain KOD1))).